Consider the following 64-residue polypeptide: uncharacterized protein (64 aa).

Positions 1-26 (MVVKENFCGACLTIPLAFAGAGTAIG) are cleaved as a signal peptide. A helical transmembrane segment spans residues 33–53 (IKKWSIVITIISLLLTVWFIY).

This sequence belongs to the IIV-6 010R family.

It localises to the host membrane. This is an uncharacterized protein from Aedes vexans (Inland floodwater mosquito).